The following is a 337-amino-acid chain: D-alanine--D-alanine ligase (337 aa).

In terms of domain architecture, ATP-grasp spans 124 to 330; sequence KMWFSALGIP…FTEYLSLVIN (207 aa). An ATP-binding site is contributed by 154-209; that stretch reads ALAQWGSIFVKAASQGSSVGCYKVDDSAKVAGVLKDAFGYAPYVIVEKTIKARELE. Positions 284, 297, and 299 each coordinate Mg(2+).

This sequence belongs to the D-alanine--D-alanine ligase family. The cofactor is Mg(2+). Requires Mn(2+) as cofactor.

It localises to the cytoplasm. It carries out the reaction 2 D-alanine + ATP = D-alanyl-D-alanine + ADP + phosphate + H(+). It participates in cell wall biogenesis; peptidoglycan biosynthesis. Functionally, cell wall formation. The sequence is that of D-alanine--D-alanine ligase from Shewanella baltica (strain OS185).